Consider the following 277-residue polypeptide: Large ribosomal subunit protein uL2 (277 aa).

The segment at 219–277 is disordered; sequence TVRGSVMNPNDHPHGGGEGRAPIGRKSPMSPWGKPTLGFKTRKKKNKSDKFIVRRRKNK. A compositionally biased stretch (basic residues) spans 258–277; the sequence is KTRKKKNKSDKFIVRRRKNK.

The protein belongs to the universal ribosomal protein uL2 family. Part of the 50S ribosomal subunit. Forms a bridge to the 30S subunit in the 70S ribosome.

In terms of biological role, one of the primary rRNA binding proteins. Required for association of the 30S and 50S subunits to form the 70S ribosome, for tRNA binding and peptide bond formation. It has been suggested to have peptidyltransferase activity; this is somewhat controversial. Makes several contacts with the 16S rRNA in the 70S ribosome. The protein is Large ribosomal subunit protein uL2 of Bacillus subtilis (strain 168).